The chain runs to 663 residues: UvrABC system protein B (663 aa).

Positions 1–10 (MIDKRDDKPF) are enriched in basic and acidic residues. A disordered region spans residues 1–23 (MIDKRDDKPFKLKSKYKPSGDQP). Residues 31 to 418 (DNIEGGEKAQ…TNTIIEQIIR (388 aa)) enclose the Helicase ATP-binding domain. Position 44–51 (44–51 (GATGTGKT)) interacts with ATP. A Beta-hairpin motif is present at residues 97–120 (YYDYYQPEAYVPSSDTYIEKDSSV). One can recognise a Helicase C-terminal domain in the interval 435–601 (QMDDLLGEIN…TIKKDIRGLI (167 aa)). Residues 627–662 (KEAINALQKQMQEAAELLDFELAAQMRDLILELKLM) form the UVR domain.

This sequence belongs to the UvrB family. Forms a heterotetramer with UvrA during the search for lesions. Interacts with UvrC in an incision complex.

Its subcellular location is the cytoplasm. Functionally, the UvrABC repair system catalyzes the recognition and processing of DNA lesions. A damage recognition complex composed of 2 UvrA and 2 UvrB subunits scans DNA for abnormalities. Upon binding of the UvrA(2)B(2) complex to a putative damaged site, the DNA wraps around one UvrB monomer. DNA wrap is dependent on ATP binding by UvrB and probably causes local melting of the DNA helix, facilitating insertion of UvrB beta-hairpin between the DNA strands. Then UvrB probes one DNA strand for the presence of a lesion. If a lesion is found the UvrA subunits dissociate and the UvrB-DNA preincision complex is formed. This complex is subsequently bound by UvrC and the second UvrB is released. If no lesion is found, the DNA wraps around the other UvrB subunit that will check the other stand for damage. This is UvrABC system protein B from Streptococcus pyogenes serotype M3 (strain ATCC BAA-595 / MGAS315).